Consider the following 1389-residue polypeptide: DNA-directed RNA polymerase subunit beta'' (1389 aa).

4 residues coordinate Zn(2+): C224, C295, C302, and C305.

Belongs to the RNA polymerase beta' chain family. RpoC2 subfamily. In terms of assembly, in plastids the minimal PEP RNA polymerase catalytic core is composed of four subunits: alpha, beta, beta', and beta''. When a (nuclear-encoded) sigma factor is associated with the core the holoenzyme is formed, which can initiate transcription. Requires Zn(2+) as cofactor.

It localises to the plastid. Its subcellular location is the chloroplast. It catalyses the reaction RNA(n) + a ribonucleoside 5'-triphosphate = RNA(n+1) + diphosphate. DNA-dependent RNA polymerase catalyzes the transcription of DNA into RNA using the four ribonucleoside triphosphates as substrates. The protein is DNA-directed RNA polymerase subunit beta'' of Morus indica (Mulberry).